A 321-amino-acid polypeptide reads, in one-letter code: Ferredoxin--NADP reductase (321 aa).

7 residues coordinate FAD: Glu-33, Gln-41, Tyr-46, Val-86, Leu-119, Asp-277, and Ser-318.

Belongs to the ferredoxin--NADP reductase type 2 family. In terms of assembly, homodimer. The cofactor is FAD.

It carries out the reaction 2 reduced [2Fe-2S]-[ferredoxin] + NADP(+) + H(+) = 2 oxidized [2Fe-2S]-[ferredoxin] + NADPH. The chain is Ferredoxin--NADP reductase from Lactococcus lactis subsp. lactis (strain IL1403) (Streptococcus lactis).